The primary structure comprises 914 residues: Dynamin-2A (914 aa).

Met-1 is subject to N-acetylmethionine. The Dynamin-type G domain occupies 35–303; sequence PATFLNVVAL…IRSRMKLRLP (269 aa). Residues 45–52 form a G1 motif region; that stretch reads GNVGAGKS. 45 to 52 lines the GTP pocket; the sequence is GNVGAGKS. The interval 71–73 is G2 motif; the sequence is ATR. The tract at residues 143-146 is G3 motif; the sequence is DLPG. GTP-binding positions include 143–147 and 204–207; these read DLPGL and GKID. The G4 motif stretch occupies residues 204-207; it reads GKID. Residues 238–241 are G5 motif; it reads AVIG. A compositionally biased stretch (basic and acidic residues) spans 507–522; it reads RREEELKGRSSKKGQD. Disordered stretches follow at residues 507 to 570 and 629 to 648; these read RREE…TAGP and PEDEVEKSKSSKDKKANGPD. A compositionally biased stretch (polar residues) spans 523–535; it reads AEQSLLSRATSPQ. Basic and acidic residues-rich tracts occupy residues 547-560 and 634-645; these read SMKDKPSPQDKETP and EKSKSSKDKKAN. Residues 572 to 696 enclose the PH domain; it reads GEITAGYLMK…WINKLQKVIQ (125 aa). The region spanning 730–823 is the GED domain; it reads LRWMSQEVRG…QLSIHDNRAA (94 aa). Positions 781–805 form a coiled coil; that stretch reads NERIESLIQEDQNVKRRRERYQKQS. A disordered region spans residues 821 to 914; it reads RAAAASSYSD…PPPTGSAYRY (94 aa). 2 stretches are compositionally biased toward polar residues: residues 826-839 and 852-866; these read SSYSDNSGTESSPR and AFNSAANGPSDSLSK.

The protein belongs to the TRAFAC class dynamin-like GTPase superfamily. Dynamin/Fzo/YdjA family. Binds PtdIns3P. Interacts with SH3P3 (via SH3 domain) and (via C-terminus) with GAMMA-ADR. May homooligomerize or heterooligomerize.

The protein resides in the cytoplasm. Its subcellular location is the cytosol. It is found in the golgi apparatus membrane. The protein localises to the cytoskeleton. It localises to the phragmoplast. The protein resides in the cytoplasmic vesicle. Its subcellular location is the clathrin-coated vesicle. The catalysed reaction is GTP + H2O = GDP + phosphate + H(+). Its activity is regulated as follows. Increased GTPase activity in the presence of phosphatidic acid. Microtubule-associated force-producing protein involved in clathrin-mediated vesicle trafficking from the trans-Golgi network to the central vacuole. Able to bind and hydrolyze GTP. Binds specifically to phosphatidylinositol 3-phosphate (PtdIns3P). The polypeptide is Dynamin-2A (DRP2A) (Arabidopsis thaliana (Mouse-ear cress)).